The chain runs to 196 residues: ATP-dependent Clp protease proteolytic subunit 1 (196 aa).

Residue Ser-96 is the Nucleophile of the active site. His-121 is an active-site residue.

Belongs to the peptidase S14 family. Fourteen ClpP subunits assemble into 2 heptameric rings which stack back to back to give a disk-like structure with a central cavity, resembling the structure of eukaryotic proteasomes.

The protein resides in the cytoplasm. It carries out the reaction Hydrolysis of proteins to small peptides in the presence of ATP and magnesium. alpha-casein is the usual test substrate. In the absence of ATP, only oligopeptides shorter than five residues are hydrolyzed (such as succinyl-Leu-Tyr-|-NHMec, and Leu-Tyr-Leu-|-Tyr-Trp, in which cleavage of the -Tyr-|-Leu- and -Tyr-|-Trp bonds also occurs).. In terms of biological role, cleaves peptides in various proteins in a process that requires ATP hydrolysis. Has a chymotrypsin-like activity. Plays a major role in the degradation of misfolded proteins. This Prochlorococcus marinus (strain NATL2A) protein is ATP-dependent Clp protease proteolytic subunit 1.